A 414-amino-acid polypeptide reads, in one-letter code: Enterobactin exporter EntS (414 aa).

The Cytoplasmic segment spans residues 1–21; it reads MNRQSWLLNLSLLKTHPAFRA. The helical transmembrane segment at 22-42 threads the bilayer; it reads VFLARFISIVSLGLLGVAVPV. Over 43 to 55 the chain is Periplasmic; the sequence is QIQMMTHSTWQVG. A helical membrane pass occupies residues 56 to 76; sequence LSVTLTGGAMFIGLMVGGVLA. The Cytoplasmic portion of the chain corresponds to 77 to 83; sequence DRYERKK. The chain crosses the membrane as a helical span at residues 84-104; it reads VILLARGTCGIGFIGLCVNSL. Over 105 to 109 the chain is Periplasmic; sequence LPEPS. Residues 110-130 traverse the membrane as a helical segment; it reads LLAIYLLGLWDGFFASLGVTA. Residues 131-156 lie on the Cytoplasmic side of the membrane; sequence LLAATPALVGRENLMQAGAITMLTVR. The chain crosses the membrane as a helical span at residues 157 to 177; that stretch reads LGSVISPMLGGILLASGGVAW. Position 178 (Asn-178) is a topological domain, periplasmic. The chain crosses the membrane as a helical span at residues 179 to 199; sequence YGLAAAGTFITLLPLLTLPRL. Residues 200–218 are Cytoplasmic-facing; it reads PVPPQPRENPFIALLAAFR. Residues 219–239 form a helical membrane-spanning segment; the sequence is FLLASPLIGGIALLGGLVTMA. Over 240 to 256 the chain is Periplasmic; that stretch reads SAVRVLYPALAMSWQMS. Residues 257-277 traverse the membrane as a helical segment; that stretch reads AAQIGLLYAAIPLGAAIGALT. The Cytoplasmic segment spans residues 278 to 287; it reads SGQLAHSVRP. Residues 288–307 form a helical membrane-spanning segment; the sequence is GLIMLVSTVGSFLAVGLFAI. Over 308–313 the chain is Periplasmic; it reads MPVWTA. The chain crosses the membrane as a helical span at residues 314 to 336; it reads GVICLALFGWLSAISSLLQYTLL. The Cytoplasmic segment spans residues 337 to 356; sequence QTQTPENMLGRMNGLWTAQN. Residues 357 to 377 form a helical membrane-spanning segment; it reads VTGDAIGAALLGGLGAMMTPV. A topological domain (periplasmic) is located at residue Ala-378. The chain crosses the membrane as a helical span at residues 379–399; the sequence is SASVSGFGLVIIGLLLLLVLG. The Cytoplasmic portion of the chain corresponds to 400–414; sequence ELRRFRQTPPVSDAG.

This sequence belongs to the major facilitator superfamily. EntS (TC 2.A.1.38) family.

Its subcellular location is the cell inner membrane. In terms of biological role, component of an export pathway for enterobactin. The polypeptide is Enterobactin exporter EntS (Salmonella choleraesuis (strain SC-B67)).